A 463-amino-acid chain; its full sequence is Glutamate-1-semialdehyde 2,1-aminomutase, chloroplastic (463 aa).

Residues 1 to 30 constitute a chloroplast transit peptide; sequence MQMQLNAKTVQGAFKAQRPRSVRGNVAVRA. K303 carries the N6-(pyridoxal phosphate)lysine modification.

This sequence belongs to the class-III pyridoxal-phosphate-dependent aminotransferase family. HemL subfamily. As to quaternary structure, homodimer. Pyridoxal 5'-phosphate serves as cofactor.

The protein resides in the plastid. Its subcellular location is the chloroplast. The enzyme catalyses (S)-4-amino-5-oxopentanoate = 5-aminolevulinate. Its pathway is porphyrin-containing compound metabolism; protoporphyrin-IX biosynthesis; 5-aminolevulinate from L-glutamyl-tRNA(Glu): step 2/2. It participates in porphyrin-containing compound metabolism; chlorophyll biosynthesis. The chain is Glutamate-1-semialdehyde 2,1-aminomutase, chloroplastic (GSA) from Chlamydomonas reinhardtii (Chlamydomonas smithii).